We begin with the raw amino-acid sequence, 395 residues long: Ketol-acid reductoisomerase, mitochondrial (395 aa).

A mitochondrion-targeting transit peptide spans 1–47 (MLRTQAARLICNSRVITAKRTFALATRAAAYSRPAARFVKPMITTRG). The region spanning 57–246 (VETVYERADW…AIGSGYVYQT (190 aa)) is the KARI N-terminal Rossmann domain. NADP(+) is bound by residues 84–93 (GYGSQGYGQG), 108–113 (RKDGAS), and 146–150 (SDAAQ). The active site involves histidine 171. One can recognise a KARI C-terminal knotted domain in the interval 247-394 (TFEREVNSDL…KEVRKLRPEN (148 aa)). Mg(2+) contacts are provided by aspartate 255, glutamate 259, glutamate 291, and glutamate 295. Substrate is bound at residue serine 317. Serine 355 is modified (phosphoserine). The hydrophilic stretch occupies residues 363–395 (DYREKLEKELDTIRNMEIWKVGKEVRKLRPENQ).

This sequence belongs to the ketol-acid reductoisomerase family. It depends on Mg(2+) as a cofactor.

The protein resides in the mitochondrion. It catalyses the reaction (2R)-2,3-dihydroxy-3-methylbutanoate + NADP(+) = (2S)-2-acetolactate + NADPH + H(+). The catalysed reaction is (2R,3R)-2,3-dihydroxy-3-methylpentanoate + NADP(+) = (S)-2-ethyl-2-hydroxy-3-oxobutanoate + NADPH + H(+). It participates in amino-acid biosynthesis; L-isoleucine biosynthesis; L-isoleucine from 2-oxobutanoate: step 2/4. It functions in the pathway amino-acid biosynthesis; L-valine biosynthesis; L-valine from pyruvate: step 2/4. Functionally, involved in the biosynthesis of branched-chain amino acids (BCAA). Catalyzes the second common step in the parallel biosynthesis of isoleucine and valine. Converts alpha-aceto-alpha-hydroxybutyrate (AHB) to alpha,beta-dihydroxy-beta-methylvalerate (DHMV) and alpha-acetolactate (AL) to alpha,beta-dihydroxy-isovalerate (DHV) in isoleucine and valine biosynthesis, respectively. The polypeptide is Ketol-acid reductoisomerase, mitochondrial (Saccharomyces cerevisiae (strain ATCC 204508 / S288c) (Baker's yeast)).